Here is a 413-residue protein sequence, read N- to C-terminus: Cyclic AMP-dependent transcription factor ATF-7 (413 aa).

The segment at 1-285 is transactivation domain; sequence MGDDRPFVCS…GMVVGTASTM (285 aa). A C2H2-type zinc finger spans residues 7–31; the sequence is FVCSAPGCGQRFTNEDHLAVHKHKH. Threonine 51 carries the phosphothreonine; by MAPK11 modification. 2 positions are modified to phosphothreonine: threonine 53 and threonine 101. Disordered regions lie at residues 81-140 and 299-337; these read ASDD…TTKP and HPDAPSPAQPQVSPAQPTPSTGGRRRRTVDEDPDERRQR. Lysine 107 participates in a covalent cross-link: Glycyl lysine isopeptide (Lys-Gly) (interchain with G-Cter in SUMO1). 2 stretches are compositionally biased toward low complexity: residues 114–126 and 307–320; these read VDSSPPDSPASSP and QPQVSPAQPTPSTG. The span at 326–337 shows a compositional bias: basic and acidic residues; it reads TVDEDPDERRQR. One can recognise a bZIP domain in the interval 332 to 395; sequence DERRQRFLER…AQLKQLLLAH (64 aa). A basic motif region spans residues 334 to 354; it reads RRQRFLERNRAAASRCRQKRK. Positions 360-388 are leucine-zipper; it reads LEKKAEELTSQNIQLSNEVTLLRNEVAQL.

Belongs to the bZIP family. As to quaternary structure, homodimer; binds DNA as homodimer. Heterodimer; heterodimerizes with other members of ATF family and with JUN family members. Interacts with JNK2; the interaction does not phosphorylate ATF7 but acts as a docking site for other ATF-associated partners such as JUN family members. Interacts (via its transactivation domain) with TAF12 the interaction potentiates the transactivation activity and is inhibited by ATF7 sumoylation. Interacts with TAF4; the interaction inhibits the TAF12-dependent transactivation. Interacts with MAPK9; the interaction does not phosphorylate ATF7 but acts as a docking site for ATF7-associated partners such as JUN. Interacts with Ku complex components XRCC6 and XRCC7. Interacts with TERT. Post-translationally, on EGF stimulation, phosphorylated first on Thr-53 allowing subsequent phosphorylation on Thr-51. This latter phosphorylation prevents sumoylation, increases binding to TAF12 and enhances transcriptional activity. Social isolation stress as well as TNF-alpha also induce the phosphorylation of ATF7. Phosphorylated in proliferating colonic and small intestinal epithelial cells. In terms of processing, sumoylation delays nuclear localization and inhibits transactivation activity through preventing binding to TAF12. RANBP2 appears to be the specific E3 ligase.

Its subcellular location is the nucleus. It is found in the nucleoplasm. It localises to the chromosome. The protein resides in the telomere. Functionally, stress-responsive chromatin regulator that plays a role in various biological processes including innate immunological memory, adipocyte differentiation or telomerase regulation. In absence of stress, contributes to the formation of heterochromatin and heterochromatin-like structure by recruiting histone H3K9 tri- and di-methyltransferases thus silencing the transcription of target genes such as Htr5b, STAT1 in adipocytes, or genes involved in innate immunity in macrophages and adipocytes. Phosphorylation of ATF7 disrupts interactions with histone methyltransferase and enhances the association with coactivators containing histone acetyltransferase and/or histone demethylase, leading to disruption of the heterochromatin-like structure and subsequently transcriptional activation. In response to TNF-alpha, which is induced by various stresses, phosphorylated ATF7 and telomerase are released from telomeres leading to telomere shortening. Also plays a role in maintaining epithelial regenerative capacity and protecting against cell death during intestinal epithelial damage and repair. The protein is Cyclic AMP-dependent transcription factor ATF-7 (Atf7) of Mus musculus (Mouse).